The primary structure comprises 202 residues: Matrix protein (202 aa).

Positions 35–38 match the PPXY motif motif; the sequence is PPEY. The interval 115 to 151 is essential for glycoprotein binding; the sequence is KLRRTLIFQWADSRGPLEGEELEYSQEITWDDNTEFV.

It belongs to the lyssavirus matrix protein family. As to quaternary structure, homomultimer. Interacts with nucleoprotein and with the cytoplasmic domain of glycoprotein. Interacts with host ATP6V1A; this interaction plays an important role in virion uncoating after viral entry.

It localises to the virion membrane. The protein resides in the host endomembrane system. The protein localises to the host cytoplasm. In terms of biological role, plays a major role in assembly, budding and uncoating of virion after membrane fusion. Completely covers the ribonucleoprotein coil and keep it in condensed bullet-shaped form. Inhibits viral transcription and stimulates replication. Plays a major role in early induction of TRAIL-mediated apoptosis in infected neurons. Inhibits the integrated stress response (ISR) in the infected cell by blocking the formation of stress granules. The polypeptide is Matrix protein (M) (Homo sapiens (Human)).